The sequence spans 893 residues: Alanine--tRNA ligase (893 aa).

Residues His574, His578, Cys678, and His682 each coordinate Zn(2+).

The protein belongs to the class-II aminoacyl-tRNA synthetase family. The cofactor is Zn(2+).

It localises to the cytoplasm. The catalysed reaction is tRNA(Ala) + L-alanine + ATP = L-alanyl-tRNA(Ala) + AMP + diphosphate. In terms of biological role, catalyzes the attachment of alanine to tRNA(Ala) in a two-step reaction: alanine is first activated by ATP to form Ala-AMP and then transferred to the acceptor end of tRNA(Ala). Also edits incorrectly charged Ser-tRNA(Ala) and Gly-tRNA(Ala) via its editing domain. The sequence is that of Alanine--tRNA ligase from Bifidobacterium longum (strain NCC 2705).